The following is a 425-amino-acid chain: Riboflavin biosynthesis protein RibBA (425 aa).

Residues 1–204 (MTRLDSVERA…IADLIEWRRK (204 aa)) are DHBP synthase. D-ribulose 5-phosphate contacts are provided by residues 28-29 (RE), aspartate 33, 141-145 (RPGHT), and glutamate 165. Glutamate 29 serves as a coordination point for Mg(2+). Residue histidine 144 coordinates Mg(2+). The GTP cyclohydrolase II stretch occupies residues 205 to 425 (HEKHIERIAE…HLPGEFGGAL (221 aa)). Residue 259–263 (RVHSE) participates in GTP binding. Cysteine 264, cysteine 275, and cysteine 277 together coordinate Zn(2+). Residues glutamine 280, 303 to 305 (EGR), and threonine 325 each bind GTP. The active-site Proton acceptor; for GTP cyclohydrolase activity is aspartate 337. Arginine 339 functions as the Nucleophile; for GTP cyclohydrolase activity in the catalytic mechanism. GTP is bound by residues threonine 360 and lysine 365.

This sequence in the N-terminal section; belongs to the DHBP synthase family. The protein in the C-terminal section; belongs to the GTP cyclohydrolase II family. Mg(2+) is required as a cofactor. Mn(2+) serves as cofactor. Requires Zn(2+) as cofactor.

It carries out the reaction D-ribulose 5-phosphate = (2S)-2-hydroxy-3-oxobutyl phosphate + formate + H(+). It catalyses the reaction GTP + 4 H2O = 2,5-diamino-6-hydroxy-4-(5-phosphoribosylamino)-pyrimidine + formate + 2 phosphate + 3 H(+). It functions in the pathway cofactor biosynthesis; riboflavin biosynthesis; 2-hydroxy-3-oxobutyl phosphate from D-ribulose 5-phosphate: step 1/1. Its pathway is cofactor biosynthesis; riboflavin biosynthesis; 5-amino-6-(D-ribitylamino)uracil from GTP: step 1/4. Functionally, catalyzes the conversion of D-ribulose 5-phosphate to formate and 3,4-dihydroxy-2-butanone 4-phosphate. Catalyzes the conversion of GTP to 2,5-diamino-6-ribosylamino-4(3H)-pyrimidinone 5'-phosphate (DARP), formate and pyrophosphate. The protein is Riboflavin biosynthesis protein RibBA of Mycolicibacterium paratuberculosis (strain ATCC BAA-968 / K-10) (Mycobacterium paratuberculosis).